The primary structure comprises 144 residues: Cytochrome c oxidase subunit 4 isoform 1, mitochondrial (144 aa).

Over 1 to 73 (SVVKSEDFTL…SFAEMNRRSN (73 aa)) the chain is Mitochondrial matrix. At lysine 4 the chain carries N6-acetyllysine; alternate. Residue lysine 4 is modified to N6-succinyllysine; alternate. Position 28 is an N6-acetyllysine (lysine 28). A phosphoserine mark is found at serine 31 and serine 33. Lysine 35 is subject to N6-acetyllysine; alternate. The residue at position 35 (lysine 35) is an N6-succinyllysine; alternate. N6-acetyllysine is present on lysine 42. Residues 74-99 (EWKTVVGTAMFFFGITALIVMWEKRY) form a helical membrane-spanning segment. Topologically, residues 100–144 (VYGPLPQTFDKEWVAMQTKRMLDMKVNPIQGLASKWDYEKNEWKK) are mitochondrial intermembrane.

The protein belongs to the cytochrome c oxidase IV family. Component of the cytochrome c oxidase (complex IV, CIV), a multisubunit enzyme composed of 14 subunits. The complex is composed of a catalytic core of 3 subunits MT-CO1, MT-CO2 and MT-CO3, encoded in the mitochondrial DNA, and 11 supernumerary subunits COX4I, COX5A, COX5B, COX6A, COX6B, COX6C, COX7A, COX7B, COX7C, COX8 and NDUFA4, which are encoded in the nuclear genome. The complex exists as a monomer or a dimer and forms supercomplexes (SCs) in the inner mitochondrial membrane with NADH-ubiquinone oxidoreductase (complex I, CI) and ubiquinol-cytochrome c oxidoreductase (cytochrome b-c1 complex, complex III, CIII), resulting in different assemblies (supercomplex SCI(1)III(2)IV(1) and megacomplex MCI(2)III(2)IV(2)). Interacts with PHB2; the interaction decreases in absence of SPHK2. Interacts with AFG1L. Interacts with ABCB7; this interaction allows the regulation of cellular iron homeostasis and cellular reactive oxygen species (ROS) levels in cardiomyocytes. Interacts with FLVCR2; this interaction occurs in the absence of heme and is disrupted upon heme binding. Interacts with IRGC.

The protein resides in the mitochondrion inner membrane. It functions in the pathway energy metabolism; oxidative phosphorylation. Its function is as follows. Component of the cytochrome c oxidase, the last enzyme in the mitochondrial electron transport chain which drives oxidative phosphorylation. The respiratory chain contains 3 multisubunit complexes succinate dehydrogenase (complex II, CII), ubiquinol-cytochrome c oxidoreductase (cytochrome b-c1 complex, complex III, CIII) and cytochrome c oxidase (complex IV, CIV), that cooperate to transfer electrons derived from NADH and succinate to molecular oxygen, creating an electrochemical gradient over the inner membrane that drives transmembrane transport and the ATP synthase. Cytochrome c oxidase is the component of the respiratory chain that catalyzes the reduction of oxygen to water. Electrons originating from reduced cytochrome c in the intermembrane space (IMS) are transferred via the dinuclear copper A center (CU(A)) of subunit 2 and heme A of subunit 1 to the active site in subunit 1, a binuclear center (BNC) formed by heme A3 and copper B (CU(B)). The BNC reduces molecular oxygen to 2 water molecules using 4 electrons from cytochrome c in the IMS and 4 protons from the mitochondrial matrix. The protein is Cytochrome c oxidase subunit 4 isoform 1, mitochondrial (COX4I1) of Theropithecus gelada (Gelada baboon).